An 877-amino-acid chain; its full sequence is MTKFTTEEVRSKFITYFKANNHTHVPASSLIPDNDPSLMFVNSGMVQFKNVFTGQEKRSYNKAVTSQKSLRAGGKHNDLEHVGYTARHHTFFEMLGNFSFGDYFKEQAIYYTWDLLTKEFELPKDKLYVTIYHTDDTAASYWEKISGLRDDRIIKIKTNDNFWSMGDTGPCGPCSEIFYDHGEEIYGGLPGTKDEDCDRFIEIWNMVFMQYEQINKETRIELPKKSIDTGMGLERMTAVLQHVNNNYDIDLFQEIINFTENIVKVKVDGEAKFSYRVIADHLRASSFLIADGIIPSNEGRGYVLRRIMRRAMRHAHMLGAKEPLMYKLLPKLVDLMGNIYPELKIAEGFISSILEQEEIRFKTTLERGLKLLTEETKTLTKGNKLSGEVAFKLYDTYGFPLDLTEDILKNRDIAVDHKGFEELMLIQKERARTSWLGSGESKTDQLWFDIKEQYGSTEFLGYTLNEAKCKIIALIKNNNLADTIQEVDTQFLLIANQTPFYGESGGQMGDIGMIFSQDSEVEVIDTLKYLRSIIVHKCILKKGKINIGENANFNIDIKYRKNLRIHHSATHILHAVLHKILGKQVIQKGSLVTSTYLRFDINHSKAITNEEITLIEDKVNEIIRNNHEVNTTVMFTEDAIKQGAIALFGEKYDSEVRVVKIGETSLELCCGTHVKRTGDIGAFKIISESSIAAGVRRIEAVCGEFVIKLIREKDNLIKLIESSVKTNKNELITKVTNILERNKELEKELEKAHLAGLDLSIEQIKKQAEQIAGIKLLYKKVGNINNKILRQAAENLTQKLENLIVVYIAHGVGKLSITVAVSKAITDKFNAGIIAKELSLFLGGSGGGGKASIAQSGGNDIVNLTNINKKLLSLIVT.

Zn(2+) is bound by residues His567, His571, Cys669, and His673.

This sequence belongs to the class-II aminoacyl-tRNA synthetase family. Zn(2+) serves as cofactor.

It localises to the cytoplasm. It catalyses the reaction tRNA(Ala) + L-alanine + ATP = L-alanyl-tRNA(Ala) + AMP + diphosphate. Functionally, catalyzes the attachment of alanine to tRNA(Ala) in a two-step reaction: alanine is first activated by ATP to form Ala-AMP and then transferred to the acceptor end of tRNA(Ala). Also edits incorrectly charged Ser-tRNA(Ala) and Gly-tRNA(Ala) via its editing domain. This is Alanine--tRNA ligase from Rickettsia typhi (strain ATCC VR-144 / Wilmington).